Reading from the N-terminus, the 177-residue chain is Thymidine kinase (177 aa).

ATP is bound at residue 11-18; sequence GPMLSGKS. The Proton acceptor role is filled by E83. F113 lines the substrate pocket. Zn(2+) contacts are provided by C138 and C141. 157–161 is a substrate binding site; that stretch reads IEIIG. The Zn(2+) site is built by C170 and C173.

It belongs to the thymidine kinase family. In terms of assembly, homotetramer. Two molecules of substrate bind to each enzyme tetramer.

The enzyme catalyses thymidine + ATP = dTMP + ADP + H(+). Its function is as follows. Phosphorylates thymidine and thymidine analogs, such as azidothymidine (AZT). Part of the salvage pathway for pyrimidine deoxyribonucleotide synthesis. This is Thymidine kinase (OPG101) from Monkeypox virus (strain Zaire-96-I-16) (MPX).